The chain runs to 308 residues: Ribonuclease 3 (308 aa).

The RNase III domain maps to 20 to 145 (YLRFYKMLGF…LVGAIYLDRG (126 aa)). Residue Glu62 coordinates Mg(2+). Asp66 is an active-site residue. The Mg(2+) site is built by Asn131 and Glu134. Glu134 is an active-site residue. Residues 173 to 242 (NFKSKLIEWS…ARVALGKIKN (70 aa)) form the DRBM domain. The interval 261 to 281 (QEEVTVSDSKPSDSGAVTPDL) is disordered.

This sequence belongs to the ribonuclease III family. Homodimer. It depends on Mg(2+) as a cofactor.

The protein localises to the cytoplasm. The enzyme catalyses Endonucleolytic cleavage to 5'-phosphomonoester.. In terms of biological role, digests double-stranded RNA. Involved in the processing of primary rRNA transcript to yield the immediate precursors to the large and small rRNAs (23S and 16S). Processes some mRNAs, and tRNAs when they are encoded in the rRNA operon. Processes pre-crRNA and tracrRNA of type II CRISPR loci if present in the organism. This is Ribonuclease 3 from Phocaeicola vulgatus (strain ATCC 8482 / DSM 1447 / JCM 5826 / CCUG 4940 / NBRC 14291 / NCTC 11154) (Bacteroides vulgatus).